Consider the following 296-residue polypeptide: MGLSHSKTHLRVIKVAPLQNKEVETPSAGRVDFAFNQNLEEKTSYSLARLQDQNKALEGQLPPLQENWYGRYSTASRDMYFDIPLEHRETSIIKRHPPQRLQKLEPIDLPRVITSGRLLSQREARTMHKAKQVLEKKMQTPMYTSENRQYLHKMQVLEMIRKRQEAQMELKKSLHGEARINKQSPRDHKAKKTLQSTPRNDDHDLLTMLPDEILNRGPGNSKNTEFLKHQAVNNYCPWKIGKMETWLHEQEAQGQLLWDSSSSDSDEQGKDEKKPRALVRTRTERIPLFDEFFDQE.

Gly2 is lipidated: N-myristoyl glycine. Basic and acidic residues-rich tracts occupy residues 173–187 (SLHG…SPRD) and 267–281 (EQGK…LVRT). 2 disordered regions span residues 173–204 (SLHG…DDHD) and 256–281 (LLWD…LVRT).

It is found in the cell membrane. It localises to the cytoplasmic vesicle. Functionally, may be involved in tuning the metabolism, energy expenditure, and excretion processes. The polypeptide is Factor associated with metabolism and energy (Homo sapiens (Human)).